A 224-amino-acid chain; its full sequence is Phosphoribosyltransferase domain-containing protein 1 (224 aa).

Glu-140 and Asp-141 together coordinate Mg(2+). Residues 140-148 (EDIINTGRT), Lys-172, 193-194 (FV), and Asp-200 contribute to the GMP site. Asp-200 contributes to the Mg(2+) binding site.

It belongs to the purine/pyrimidine phosphoribosyltransferase family.

The protein is Phosphoribosyltransferase domain-containing protein 1 (prtfdc1) of Xenopus tropicalis (Western clawed frog).